The following is a 369-amino-acid chain: MEGVTVVSFFLLFIATAMAAKSTVSFRDGMLPNGDFELGPKPSDMKGTEILNKLAIPNWEVTGFVEYIKSGHKQGDMLLVVPAGKFAVRLGNEASIKQRLKVVKGMYYSLTFSAARTCAQDERLNISVAPDSGVIPIQTVYSSSGWDLYAWAFQAESDVAEVVIHNPGVEEDPACGPLIDGVAMRSLYPPRPTNKNILKNGGFEEGPLVLPGSTTGVLIPPFIEDDHSPLPGWMVESLKAVKYVDVEHFSVPQGRRAIELVAGKESAIAQVVRTVIGKTYVLSFAVGDANNACKGSMVVEAFAGKDTLKVPYESKGTGGFKRASIRFVAVSTRSRIMFYSTFYAMRSDDFSSLCGPVIDDVKLISVRKP.

A signal peptide spans Met-1–Ala-19. Asn-125 carries an N-linked (GlcNAc...) asparagine glycan.

As to expression, expressed in roots, seedlings and leaves.

The protein resides in the secreted. It localises to the cell wall. Functionally, involved in the regulation of testa rupture during seed germination. Required during roots and rosettes development. The sequence is that of Protein DUF642 L-GALACTONO-1,4-LACTONE-RESPONSIVE GENE 2 from Arabidopsis thaliana (Mouse-ear cress).